Reading from the N-terminus, the 145-residue chain is MNFKYIVAVSFLIASAYARSVQNDEQSLSQRDVLEEESLREIRSIGAKILGGVKTFFKGALKELASTYLQQKRTAEEQHEVMKRLEAVMRDLDSLDHPEEASERETRGFNQEEIANLFTKKEKRILGPVISKIGGVLGGLLKNLG.

Residues 1-18 (MNFKYIVAVSFLIASAYA) form the signal peptide. 2 consecutive propeptides follow at residues 19–43 (RSVQNDEQSLSQRDVLEEESLREIR) and 74–124 (TAEE…KEKR). Leu-144 is modified (leucine amide).

It belongs to the bombinin family. Expressed by the skin glands.

Its subcellular location is the secreted. Functionally, maximin-5 shows antibacterial activity against both Gram-positive and Gram-negative bacteria. The only exception is the resistance of E.coli. Also shows antimicrobial activity against fungi C.albicans, A.flavus and P.uticale. It has little hemolytic activity. It does not possess a significant cytotoxicity against tumor cell lines. It does not possess a significant anti-HIV activity. Its function is as follows. Maximin-H4 shows antibacterial activity against both Gram-positive and Gram-negative bacteria. It also shows antimicrobial activity against the fungus C.albicans. Shows strong hemolytic activity. The sequence is that of Maximins 5/H4 type 2 from Bombina maxima (Giant fire-bellied toad).